A 343-amino-acid chain; its full sequence is N-acetyl-gamma-glutamyl-phosphate reductase (343 aa).

C149 is a catalytic residue.

This sequence belongs to the NAGSA dehydrogenase family. Type 1 subfamily.

The protein localises to the cytoplasm. It catalyses the reaction N-acetyl-L-glutamate 5-semialdehyde + phosphate + NADP(+) = N-acetyl-L-glutamyl 5-phosphate + NADPH + H(+). It participates in amino-acid biosynthesis; L-arginine biosynthesis; N(2)-acetyl-L-ornithine from L-glutamate: step 3/4. Its function is as follows. Catalyzes the NADPH-dependent reduction of N-acetyl-5-glutamyl phosphate to yield N-acetyl-L-glutamate 5-semialdehyde. In Methanococcus maripaludis (strain C7 / ATCC BAA-1331), this protein is N-acetyl-gamma-glutamyl-phosphate reductase.